The chain runs to 271 residues: 4-hydroxy-tetrahydrodipicolinate reductase (271 aa).

NAD(+) is bound by residues 10–15, E36, 100–102, and 124–127; these read GAGGRM, GTT, and SGNM. H157 functions as the Proton donor/acceptor in the catalytic mechanism. H158 is a binding site for (S)-2,3,4,5-tetrahydrodipicolinate. K161 (proton donor) is an active-site residue. Residue 167–168 participates in (S)-2,3,4,5-tetrahydrodipicolinate binding; that stretch reads GT.

It belongs to the DapB family.

The protein localises to the cytoplasm. The catalysed reaction is (S)-2,3,4,5-tetrahydrodipicolinate + NAD(+) + H2O = (2S,4S)-4-hydroxy-2,3,4,5-tetrahydrodipicolinate + NADH + H(+). The enzyme catalyses (S)-2,3,4,5-tetrahydrodipicolinate + NADP(+) + H2O = (2S,4S)-4-hydroxy-2,3,4,5-tetrahydrodipicolinate + NADPH + H(+). It functions in the pathway amino-acid biosynthesis; L-lysine biosynthesis via DAP pathway; (S)-tetrahydrodipicolinate from L-aspartate: step 4/4. Catalyzes the conversion of 4-hydroxy-tetrahydrodipicolinate (HTPA) to tetrahydrodipicolinate. The sequence is that of 4-hydroxy-tetrahydrodipicolinate reductase from Rhodopseudomonas palustris (strain BisB5).